The following is a 443-amino-acid chain: Probable D-serine dehydratase (443 aa).

Position 118 is an N6-(pyridoxal phosphate)lysine (Lys-118).

Belongs to the serine/threonine dehydratase family. DsdA subfamily. Pyridoxal 5'-phosphate is required as a cofactor.

The enzyme catalyses D-serine = pyruvate + NH4(+). This is Probable D-serine dehydratase from Vibrio campbellii (strain ATCC BAA-1116).